The primary structure comprises 404 residues: Cysteine desulfurase IscS (404 aa).

Residues 75–76 (AT), asparagine 155, glutamine 183, and 203–205 (SGH) contribute to the pyridoxal 5'-phosphate site. The residue at position 206 (lysine 206) is an N6-(pyridoxal phosphate)lysine. Threonine 243 serves as a coordination point for pyridoxal 5'-phosphate. The active-site Cysteine persulfide intermediate is cysteine 328. Cysteine 328 contributes to the [2Fe-2S] cluster binding site.

Belongs to the class-V pyridoxal-phosphate-dependent aminotransferase family. NifS/IscS subfamily. Homodimer. Forms a heterotetramer with IscU, interacts with other sulfur acceptors. Requires pyridoxal 5'-phosphate as cofactor.

Its subcellular location is the cytoplasm. It carries out the reaction (sulfur carrier)-H + L-cysteine = (sulfur carrier)-SH + L-alanine. It functions in the pathway cofactor biosynthesis; iron-sulfur cluster biosynthesis. Functionally, master enzyme that delivers sulfur to a number of partners involved in Fe-S cluster assembly, tRNA modification or cofactor biosynthesis. Catalyzes the removal of elemental sulfur atoms from cysteine to produce alanine. Functions as a sulfur delivery protein for Fe-S cluster synthesis onto IscU, an Fe-S scaffold assembly protein, as well as other S acceptor proteins. The protein is Cysteine desulfurase IscS of Pectobacterium carotovorum subsp. carotovorum (strain PC1).